Reading from the N-terminus, the 141-residue chain is Large ribosomal subunit protein uL22c (141 aa).

Belongs to the universal ribosomal protein uL22 family. In terms of assembly, part of the 50S ribosomal subunit.

The protein localises to the plastid. The protein resides in the chloroplast. Functionally, this protein binds specifically to 23S rRNA. In terms of biological role, the globular domain of the protein is located near the polypeptide exit tunnel on the outside of the subunit, while an extended beta-hairpin is found that lines the wall of the exit tunnel in the center of the 70S ribosome. This Chloranthus spicatus (Chulantree) protein is Large ribosomal subunit protein uL22c (rpl22).